A 122-amino-acid chain; its full sequence is Small ribosomal subunit protein uS13 (122 aa).

The interval 95–122 (GLPVRGQRTRTNARTRKGPRKTVAKKKK) is disordered.

This sequence belongs to the universal ribosomal protein uS13 family. Part of the 30S ribosomal subunit. Forms a loose heterodimer with protein S19. Forms two bridges to the 50S subunit in the 70S ribosome.

Its function is as follows. Located at the top of the head of the 30S subunit, it contacts several helices of the 16S rRNA. In the 70S ribosome it contacts the 23S rRNA (bridge B1a) and protein L5 of the 50S subunit (bridge B1b), connecting the 2 subunits; these bridges are implicated in subunit movement. Contacts the tRNAs in the A and P-sites. The protein is Small ribosomal subunit protein uS13 of Thermoanaerobacter pseudethanolicus (strain ATCC 33223 / 39E) (Clostridium thermohydrosulfuricum).